Consider the following 176-residue polypeptide: Acireductone dioxygenase (176 aa).

Fe(2+)-binding residues include His-100, His-102, Glu-106, and His-145. Ni(2+) contacts are provided by His-100, His-102, Glu-106, and His-145.

It belongs to the acireductone dioxygenase (ARD) family. As to quaternary structure, monomer. Fe(2+) serves as cofactor. Ni(2+) is required as a cofactor.

It catalyses the reaction 1,2-dihydroxy-5-(methylsulfanyl)pent-1-en-3-one + O2 = 3-(methylsulfanyl)propanoate + CO + formate + 2 H(+). It carries out the reaction 1,2-dihydroxy-5-(methylsulfanyl)pent-1-en-3-one + O2 = 4-methylsulfanyl-2-oxobutanoate + formate + 2 H(+). It functions in the pathway amino-acid biosynthesis; L-methionine biosynthesis via salvage pathway; L-methionine from S-methyl-5-thio-alpha-D-ribose 1-phosphate: step 5/6. In terms of biological role, catalyzes 2 different reactions between oxygen and the acireductone 1,2-dihydroxy-3-keto-5-methylthiopentene (DHK-MTPene) depending upon the metal bound in the active site. Fe-containing acireductone dioxygenase (Fe-ARD) produces formate and 2-keto-4-methylthiobutyrate (KMTB), the alpha-ketoacid precursor of methionine in the methionine recycle pathway. Ni-containing acireductone dioxygenase (Ni-ARD) produces methylthiopropionate, carbon monoxide and formate, and does not lie on the methionine recycle pathway. The chain is Acireductone dioxygenase from Bacillus pumilus (strain SAFR-032).